The chain runs to 311 residues: Acyl-CoA dehydrogenase IpdE2 (311 aa).

2 residues coordinate FAD: Arg-206 and Gly-273.

This sequence belongs to the acyl-CoA dehydrogenase family. As to quaternary structure, heterotetramer composed of 2 IpdE1 subunits and 2 IpdE2 subunits. FAD serves as cofactor.

It carries out the reaction 3-[(3aS,4S,5R,7aS)-5-hydroxy-7a-methyl-1-oxo-octahydro-1H-inden-4-yl]propanoyl-CoA + A = (2E)-3-[(3aS,4S,5R,7aS)-5-hydroxy-7a-methyl-1-oxo-octahydro-1H-inden-4-yl]prop-2-enoyl-CoA + AH2. It functions in the pathway steroid metabolism; cholesterol degradation. In terms of biological role, involved in cholesterol degradation. Catalyzes the dehydrogenation of 5OH-HIP-CoA to 5OH-HIPE-CoA. This is Acyl-CoA dehydrogenase IpdE2 from Mycolicibacterium smegmatis (strain ATCC 700084 / mc(2)155) (Mycobacterium smegmatis).